Here is a 154-residue protein sequence, read N- to C-terminus: Small ribosomal subunit protein bS6 (154 aa).

The disordered stretch occupies residues 107–154 (KSDDRERGFRGPKPPGRFESGRKRGYDDREEFRARAGGDDDDRGLDQE). Residues 125–154 (ESGRKRGYDDREEFRARAGGDDDDRGLDQE) show a composition bias toward basic and acidic residues.

Belongs to the bacterial ribosomal protein bS6 family.

Binds together with bS18 to 16S ribosomal RNA. In Granulibacter bethesdensis (strain ATCC BAA-1260 / CGDNIH1), this protein is Small ribosomal subunit protein bS6.